A 385-amino-acid chain; its full sequence is MAGSEPRGAGSPPPASDWGRLEAAILSGWRTFWYSVAKERATPTASRKEAAEETSALTRLPVDVQLYILSFLSPHDLCQLGSTDHYWNKTIRDPILWRYFLLRDLPSWSSVDWKSLPDLEILKKPISEVTDSTCLDYMEVYKMCCPYTRRALKASRPMYGVVTSFLHSLIIQNEPRFAMFGPGLEELNTSLVLSLMSSEDLCPTAGLPHRQIDGIGSGVNFQLNNQQKFNILILYSTTRKERDRAREEHTSTVNKMFSLQSEGDEQQGSRYSVIPQIQKVCEVVDGFIYVANAEAHRRHEWQDEFSRIMAMTDPAFGSSGRPMLVLSCISQADVKRMPCFYLAHELHLSLLNHPWMVQDTEAETLTGFLNGIEWILEEVESKRAK.

S11 and S46 each carry phosphoserine. The F-box domain occupies 54 to 100 (TSALTRLPVDVQLYILSFLSPHDLCQLGSTDHYWNKTIRDPILWRYF).

Homodimer. Part of the SCF (SKP1-CUL1-F-box) E3 ubiquitin-protein ligase complex SCF(FBXO4) formed of CUL1, SKP1, RBX1 and FBXO4. Interacts with TERF1; this interaction is prevented in the presence of GNL3L. Identified in a complex with CRYAB and CCND1. Phosphorylation at Ser-11 varies during the cell cycle. It is low in resting cells and high in the S phase and the G2/M phase of the cell cycle. Phosphorylation is decreased during late G1 phase. Phosphorylation at Ser-11 is important for homodimerization and for optimal ubiquitin ligase activity towards CCND1.

The protein localises to the cytoplasm. It functions in the pathway protein modification; protein ubiquitination. In terms of biological role, substrate recognition component of a SCF (SKP1-CUL1-F-box protein) E3 ubiquitin-protein ligase complex that mediates the ubiquitination and subsequent proteasomal degradation of target proteins. Promotes ubiquitination of cyclin-D1 (CCND1) and its subsequent proteasomal degradation. However, it does not act as a major regulator of CCND1 stability during the G1/S transition. Recognizes TERF1 and promotes its ubiquitination together with UBE2D1. Promotes ubiquitination of FXR1 following phosphorylation of FXR1 by GSK3B, leading to FXR1 degradation by the proteasome. This is F-box only protein 4 from Mus musculus (Mouse).